The primary structure comprises 366 residues: Phenylalanine dehydrogenase (366 aa).

R45 is a binding site for NAD(+). K69 provides a ligand contact to L-phenylalanine. K81 is a catalytic residue. Residues D116, T151, G181–E187, D204–I205, A241–K242, and S262–N264 contribute to the NAD(+) site. An L-phenylalanine-binding site is contributed by N264.

Belongs to the Glu/Leu/Phe/Val dehydrogenases family.

The enzyme catalyses L-phenylalanine + NAD(+) + H2O = 3-phenylpyruvate + NH4(+) + NADH + H(+). Its pathway is amino-acid biosynthesis; L-phenylalanine biosynthesis; L-phenylalanine from phenylpyruvate (PDH route): step 1/1. Functionally, catalyzes the reversible NAD(+)-dependent oxidative deamination of L-phenylalanine to phenylpyruvate. This is Phenylalanine dehydrogenase from Thermoactinomyces intermedius.